The following is a 193-amino-acid chain: Protein CURVATURE THYLAKOID 1D, chloroplastic (193 aa).

A chloroplast-targeting transit peptide spans 1–51 (MELCTRSTTIITHLPASFNGHGYLAGKSVDRISLPLQRNVASLVLQSRTLR). The Stromal portion of the chain corresponds to 52 to 117 (CSRKFPGETV…NDIKLDSDKT (66 aa)). Residues 118–138 (YSILLYGSGAIVALYLTSAIV) traverse the membrane as a helical segment. Topologically, residues 139–142 (SSLE) are lumenal. Residues 143–163 (AIPLFPKLMEVVGLGYTLWFT) traverse the membrane as a helical segment. Topologically, residues 164-193 (TRYLLFKRNREELKTKVSEIKKQVLGSDSE) are stromal.

Belongs to the CURT family. As to quaternary structure, homo- and heterodimers and trimers.

It localises to the plastid. Its subcellular location is the chloroplast thylakoid membrane. Its function is as follows. Determines thylakoid architecture by inducing membrane curvature. The protein is Protein CURVATURE THYLAKOID 1D, chloroplastic (CURT1D) of Arabidopsis thaliana (Mouse-ear cress).